The primary structure comprises 492 residues: MVLYTRPPRLSVSRETFFGRQTPVVIPVFKEGDSIKLPEGLPQDLESLLKESYNSKAVSPEPGSVAKLPYRGGLVVTAGCGAPGDLEGVRRGFAAASRQVVDSFEEAQLYLVGLDTVSSTEAVIGALLGAYRLEEFKNTRKRKLQQLWVYGGEPRLDYAQAVAEGVYLARDIANAPPHRLPPAKLAAAVEDLFSKFDNVDVEVFSYDRLLEEGFGGIVSVGMGSEEKPRLIIIKYRGGAGEPIALVGKAVVFDSGGINLKPSQGMTLMRADKAGGAAVVGAMWTAARLGIKASIIGLIPAVINVPSGSSYLPSDVIRMWDGTMVEITNTDAEGRLILADAISYAAKQLGAKTVIDLATLTGAIVVALGPLIAGLFTRSDGLARAFEEASRTTGEKIWRMPMEDEYAKSLTQPAQAGEIVNAAQRYGGAIFGALFLERFVHGKEFAHLDIAGPGIAFEAGSLAPPYWPEKGMAPGYGVRLLIEVLSRMARGGG.

Mn(2+) is bound by residues lysine 248 and aspartate 253. Lysine 260 is an active-site residue. Residues aspartate 271, aspartate 330, and glutamate 332 each coordinate Mn(2+). The active site involves arginine 334.

The protein belongs to the peptidase M17 family. Requires Mn(2+) as cofactor.

The protein localises to the cytoplasm. The catalysed reaction is Release of an N-terminal amino acid, Xaa-|-Yaa-, in which Xaa is preferably Leu, but may be other amino acids including Pro although not Arg or Lys, and Yaa may be Pro. Amino acid amides and methyl esters are also readily hydrolyzed, but rates on arylamides are exceedingly low.. The enzyme catalyses Release of an N-terminal amino acid, preferentially leucine, but not glutamic or aspartic acids.. In terms of biological role, presumably involved in the processing and regular turnover of intracellular proteins. Catalyzes the removal of unsubstituted N-terminal amino acids from various peptides. This chain is Probable cytosol aminopeptidase (pepA), found in Aeropyrum pernix (strain ATCC 700893 / DSM 11879 / JCM 9820 / NBRC 100138 / K1).